Here is an 839-residue protein sequence, read N- to C-terminus: DNA (cytosine-5)-methyltransferase CMT3 (839 aa).

2 disordered regions span residues 1-38 (MAPKRKRPATKDDTTKSIPKPKKRAPKRAKTVKEEPVT) and 51-86 (LDEPIPESEAKSTWPDRYKPIEVQPPKASSRKKTKD). Positions 19–30 (PKPKKRAPKRAK) are enriched in basic residues. Positions 51 to 70 (LDEPIPESEAKSTWPDRYKP) are enriched in basic and acidic residues. Residues 108 to 227 (QIYELNDDAY…LPYDTFEAIQ (120 aa)) enclose the BAH domain. The SAM-dependent MTase C5-type domain maps to 269–813 (ATLLDLYSGC…YALGTAFQGL (545 aa)). One can recognise a Chromo domain in the interval 382–447 (FTVDKIVGIS…LGYKSGILPL (66 aa)). Cys-460 is a catalytic residue.

This sequence belongs to the class I-like SAM-binding methyltransferase superfamily. C5-methyltransferase family. Homodimer. Interacts with HP1 and, through its chromodomain, with the N-terminal tail of histone H3 doubly methylated at 'Lys-9' and 'Lys-27'. Binds to JMJ24. Ubiquitinated by JMJ24, subsequently beingargeted to proteasomal degradation thus initiating the destabilization of the heterochromatic state of endogenous silenced loci.

The protein resides in the nucleus. The enzyme catalyses a 2'-deoxycytidine in DNA + S-adenosyl-L-methionine = a 5-methyl-2'-deoxycytidine in DNA + S-adenosyl-L-homocysteine + H(+). Its function is as follows. Involved in the CpXpG methylation (e.g. CHG cytosine) and in gene silencing. Methylates preferentially transposon-related sequences. Functionally redundant to DRM1/DRM2 to maintain non-CpG methylation. Involved in RNA-directed DNA methylation. This Arabidopsis thaliana (Mouse-ear cress) protein is DNA (cytosine-5)-methyltransferase CMT3.